The sequence spans 67 residues: DNA-directed RNA polymerase subunit omega (67 aa).

It belongs to the RNA polymerase subunit omega family. As to quaternary structure, the RNAP catalytic core consists of 2 alpha, 1 beta, 1 beta' and 1 omega subunit. When a sigma factor is associated with the core the holoenzyme is formed, which can initiate transcription.

It carries out the reaction RNA(n) + a ribonucleoside 5'-triphosphate = RNA(n+1) + diphosphate. Functionally, promotes RNA polymerase assembly. Latches the N- and C-terminal regions of the beta' subunit thereby facilitating its interaction with the beta and alpha subunits. This chain is DNA-directed RNA polymerase subunit omega, found in Variovorax paradoxus (strain S110).